The chain runs to 430 residues: Aspartate aminotransferase, mitochondrial (430 aa).

The transit peptide at 1–29 (MALLHSARVLSGVASAFHPGLAAAASARA) directs the protein to the mitochondrion. The residue at position 48 (Thr48) is a Phosphothreonine. Lys59 carries the N6-acetyllysine modification. Residue Gly65 coordinates substrate. Lys73 carries the post-translational modification N6-acetyllysine; alternate. The residue at position 73 (Lys73) is an N6-succinyllysine; alternate. An N6-acetyllysine modification is found at Lys82. Lys90 bears the N6-acetyllysine; alternate mark. Lys90 is subject to N6-succinyllysine; alternate. Tyr96 is modified (3'-nitrotyrosine; alternate). Residue Tyr96 is modified to Phosphotyrosine; alternate. Lys122 is modified (N6-acetyllysine; alternate). Lys122 carries the N6-succinyllysine; alternate modification. Ser143 is modified (phosphoserine). Lys159 bears the N6-acetyllysine; alternate mark. Lys159 carries the N6-succinyllysine; alternate modification. Trp162 provides a ligand contact to substrate. Position 185 is an N6-acetyllysine; alternate (Lys185). Lys185 bears the N6-succinyllysine; alternate mark. A substrate-binding site is contributed by Asn215. At Lys227 the chain carries N6-succinyllysine. Lys234 is modified (N6-acetyllysine). N6-acetyllysine; alternate is present on residues Lys279 and Lys296. N6-(pyridoxal phosphate)lysine; alternate is present on Lys279. Lys296 carries the post-translational modification N6-succinyllysine; alternate. Lys302 is modified (N6-acetyllysine). The residue at position 309 (Lys309) is an N6-acetyllysine; alternate. Lys309 carries the post-translational modification N6-succinyllysine; alternate. Asymmetric dimethylarginine is present on Arg313. Lys338 is modified (N6-acetyllysine; alternate). Position 338 is an N6-succinyllysine; alternate (Lys338). Lys345 bears the N6-acetyllysine mark. The residue at position 363 (Lys363) is an N6-acetyllysine; alternate. Lys363 is subject to N6-succinyllysine; alternate. N6-acetyllysine occurs at positions 364 and 387. N6-acetyllysine; alternate is present on residues Lys396 and Lys404. Lys396 and Lys404 each carry N6-succinyllysine; alternate. Arg407 is a binding site for substrate.

Belongs to the class-I pyridoxal-phosphate-dependent aminotransferase family. As to quaternary structure, homodimer. Pyridoxal 5'-phosphate is required as a cofactor.

Its subcellular location is the mitochondrion matrix. The protein localises to the cell membrane. The catalysed reaction is L-aspartate + 2-oxoglutarate = oxaloacetate + L-glutamate. The enzyme catalyses L-kynurenine + 2-oxoglutarate = kynurenate + L-glutamate + H2O. Catalyzes the irreversible transamination of the L-tryptophan metabolite L-kynurenine to form kynurenic acid (KA). As a member of the malate-aspartate shuttle, it has a key role in the intracellular NAD(H) redox balance. Is important for metabolite exchange between mitochondria and cytosol, and for amino acid metabolism. Facilitates cellular uptake of long-chain free fatty acids. In Oryctolagus cuniculus (Rabbit), this protein is Aspartate aminotransferase, mitochondrial (GOT2).